A 431-amino-acid chain; its full sequence is Mitochondrial distribution and morphology protein 12 (431 aa).

An SMP-LTD domain is found at 1–431 (MSIDLNWETL…VYPSFWTFLV (431 aa)). Disordered regions lie at residues 68 to 153 (DFYE…GVST) and 209 to 289 (QSHT…PKPE). Residues 69-96 (FYEDLDDDDGGSDEDDEGSNSCQTDEEN) are compositionally biased toward acidic residues. The span at 97–113 (EAAKTLRERRKMDRVER) shows a compositional bias: basic and acidic residues. Residues 115–129 (ANGSSNVSNPPSYTD) are compositionally biased toward polar residues. The segment covering 241–252 (SASTLAVSSSTT) has biased composition (low complexity).

It belongs to the MDM12 family. In terms of assembly, component of the ER-mitochondria encounter structure (ERMES) or MDM complex, composed of mmm1, mdm10, mdm12 and mdm34. A mmm1 homodimer associates with one molecule of mdm12 on each side in a pairwise head-to-tail manner, and the SMP-LTD domains of mmm1 and mdm12 generate a continuous hydrophobic tunnel for phospholipid trafficking.

The protein resides in the mitochondrion outer membrane. Its subcellular location is the endoplasmic reticulum membrane. Its function is as follows. Component of the ERMES/MDM complex, which serves as a molecular tether to connect the endoplasmic reticulum (ER) and mitochondria. Components of this complex are involved in the control of mitochondrial shape and protein biogenesis, and function in nonvesicular lipid trafficking between the ER and mitochondria. Mdm12 is required for the interaction of the ER-resident membrane protein mmm1 and the outer mitochondrial membrane-resident beta-barrel protein mdm10. The mdm12-mmm1 subcomplex functions in the major beta-barrel assembly pathway that is responsible for biogenesis of all mitochondrial outer membrane beta-barrel proteins, and acts in a late step after the SAM complex. The mdm10-mdm12-mmm1 subcomplex further acts in the TOM40-specific pathway after the action of the mdm12-mmm1 complex. Essential for establishing and maintaining the structure of mitochondria and maintenance of mtDNA nucleoids. The polypeptide is Mitochondrial distribution and morphology protein 12 (Sclerotinia sclerotiorum (strain ATCC 18683 / 1980 / Ss-1) (White mold)).